Reading from the N-terminus, the 78-residue chain is Cytochrome c-551 (78 aa).

Residues cysteine 14, cysteine 17, histidine 18, and methionine 55 each coordinate heme c.

Post-translationally, binds 1 heme c group covalently per subunit.

In Halorhodospira halophila (Ectothiorhodospira halophila), this protein is Cytochrome c-551.